The primary structure comprises 501 residues: MFSNQYIQQRIHKANSLREEGKNPYKNGLKRSLTNAAFLEKYAYVKGLEEPKDKEKCESVVGRVKLLRLMGKACFIKIEDESAILQAYVSQNELNDEFKSLKKHLEVGDIVLVKGFPFATKTGELSIHALEFHILSKTIVPLPEKFHGLSDIELRYRQRYLDLIVNPGVKDVFKKRSLIVSSVRKFFEMEGFLEVETPMMHPIPGGANARPFITYHNALEIERYLRIAPELYLKRLIVGGFEAVFEINRNFRNEGMDHSHNPEFTMIEFYWAYHTYEDLIELSKRLFDYLLKTLNLDSKIIYNDMEVDFNQTSVISYLDALETIGGISKGILEKEDRLLAYLLEQGIKVEPNLTHGKLLAEAFDHFVEHKLINPTFVTEYPIEISPLARRNDSNPNIADRFELFIAGKEIANGFSELNDPLDQLERFKNQVAEKEKGDEEAQYMDEDYVWALAHEMPPTAGQGIGIDRLVMLLTGAKSIKDVILFPAMRPVKNDFNVEGEE.

Mg(2+) contacts are provided by glutamate 402 and glutamate 409.

The protein belongs to the class-II aminoacyl-tRNA synthetase family. In terms of assembly, homodimer. Mg(2+) serves as cofactor.

Its subcellular location is the cytoplasm. The enzyme catalyses tRNA(Lys) + L-lysine + ATP = L-lysyl-tRNA(Lys) + AMP + diphosphate. In Helicobacter pylori (strain J99 / ATCC 700824) (Campylobacter pylori J99), this protein is Lysine--tRNA ligase (lysS).